We begin with the raw amino-acid sequence, 356 residues long: tRNA-specific 2-thiouridylase MnmA (356 aa).

Residues 8-15 (GMSGGVDS) and M34 contribute to the ATP site. C103 (nucleophile) is an active-site residue. An intrachain disulfide couples C103 to C199. Position 127 (G127) interacts with ATP. The tract at residues 149-151 (KDQ) is interaction with tRNA. C199 acts as the Cysteine persulfide intermediate in catalysis. An interaction with tRNA region spans residues 305 to 306 (RY).

This sequence belongs to the MnmA/TRMU family.

The protein resides in the cytoplasm. The enzyme catalyses S-sulfanyl-L-cysteinyl-[protein] + uridine(34) in tRNA + AH2 + ATP = 2-thiouridine(34) in tRNA + L-cysteinyl-[protein] + A + AMP + diphosphate + H(+). Its function is as follows. Catalyzes the 2-thiolation of uridine at the wobble position (U34) of tRNA, leading to the formation of s(2)U34. The protein is tRNA-specific 2-thiouridylase MnmA of Clostridium kluyveri (strain ATCC 8527 / DSM 555 / NBRC 12016 / NCIMB 10680 / K1).